The primary structure comprises 225 residues: Germin-like protein 8-6 (225 aa).

The N-terminal stretch at 1–23 is a signal peptide; it reads MASPSSLCLLTALLALVSWQTIA. A disulfide bridge connects residues Cys-33 and Cys-48. Positions 63 to 213 constitute a Cupin type-1 domain; the sequence is AMLDTPRKTN…AFQVEKGTID (151 aa). An N-linked (GlcNAc...) asparagine glycan is attached at Asn-77. 3 residues coordinate Mn(2+): His-110, His-112, and Glu-117. N-linked (GlcNAc...) asparagine glycosylation is present at Asn-136. Position 158 (His-158) interacts with Mn(2+).

The protein belongs to the germin family. In terms of assembly, oligomer (believed to be a pentamer but probably hexamer).

The protein localises to the secreted. The protein resides in the extracellular space. Its subcellular location is the apoplast. Its function is as follows. Plays a role in broad-spectrum disease resistance. Probably has no oxalate oxidase activity even if the active site is conserved. The chain is Germin-like protein 8-6 from Oryza sativa subsp. japonica (Rice).